We begin with the raw amino-acid sequence, 288 residues long: HTH-type transcriptional regulator CzcR (288 aa).

Residues 1 to 58 (MELRDLQIFKCVAHHKSITGAAKELNYVQSNVTARIKQLENELKTPLFNRHKKGVSLS) enclose the HTH lysR-type domain. The H-T-H motif DNA-binding region spans 18–37 (ITGAAKELNYVQSNVTARIK).

It belongs to the LysR transcriptional regulatory family.

The sequence is that of HTH-type transcriptional regulator CzcR (czcR) from Bacillus subtilis (strain 168).